The sequence spans 541 residues: NEDD8-activating enzyme E1 regulatory subunit (541 aa).

The protein belongs to the ubiquitin-activating E1 family. ULA1 subfamily. Heterodimer of uba-3 and ula-1. The complex binds NEDD8 and ubc-12.

The protein operates within protein modification; protein neddylation. Its function is as follows. Regulatory subunit of the dimeric uba-3-ula-1 E1 enzyme. E1 activates NEDD8 by first adenylating its C-terminal glycine residue with ATP, thereafter linking this residue to the side chain of the catalytic cysteine, yielding a NEDD8-rfl-1 (uba-3) thioester and free AMP. E1 finally transfers NEDD8 to the catalytic cysteine of ubc-12. Required for rfl-1 (uba-3) nuclear localization during early embryonic development. This chain is NEDD8-activating enzyme E1 regulatory subunit (ula-1), found in Caenorhabditis elegans.